The sequence spans 482 residues: Chromosomal replication initiator protein DnaA (482 aa).

A domain I, interacts with DnaA modulators region spans residues 1–71 (MKQSILFERV…TGLFQAEDPE (71 aa)). The domain II stretch occupies residues 71 to 139 (EILKIEVLVR…ASFGSPLFGS (69 aa)). Residues 140-362 (PLDSRFTFDT…GAFNQLVFRR (223 aa)) form a domain III, AAA+ region region. 4 residues coordinate ATP: Gly186, Gly188, Lys189, and Thr190. A domain IV, binds dsDNA region spans residues 363–482 (SFEPNLSIER…VELLKRLINE (120 aa)).

The protein belongs to the DnaA family. Oligomerizes as a right-handed, spiral filament on DNA at oriC.

It is found in the cytoplasm. Its function is as follows. Plays an essential role in the initiation and regulation of chromosomal replication. ATP-DnaA binds to the origin of replication (oriC) to initiate formation of the DNA replication initiation complex once per cell cycle. Binds the DnaA box (a 9 base pair repeat at the origin) and separates the double-stranded (ds)DNA. Forms a right-handed helical filament on oriC DNA; dsDNA binds to the exterior of the filament while single-stranded (ss)DNA is stabiized in the filament's interior. The ATP-DnaA-oriC complex binds and stabilizes one strand of the AT-rich DNA unwinding element (DUE), permitting loading of DNA polymerase. After initiation quickly degrades to an ADP-DnaA complex that is not apt for DNA replication. Binds acidic phospholipids. This chain is Chromosomal replication initiator protein DnaA, found in Rhizobium johnstonii (strain DSM 114642 / LMG 32736 / 3841) (Rhizobium leguminosarum bv. viciae).